We begin with the raw amino-acid sequence, 122 residues long: Large ribosomal subunit protein bL19c (122 aa).

This sequence belongs to the bacterial ribosomal protein bL19 family.

It localises to the plastid. Its subcellular location is the chloroplast. The polypeptide is Large ribosomal subunit protein bL19c (Gracilaria tenuistipitata var. liui (Red alga)).